Here is a 353-residue protein sequence, read N- to C-terminus: Photosystem II D2 protein (353 aa).

T2 bears the N-acetylthreonine mark. Phosphothreonine is present on T2. Residues 41–61 (CAYFALGGWFTGTTFVTSWYT) traverse the membrane as a helical segment. H118 contributes to the chlorophyll a binding site. The helical transmembrane segment at 125–141 (GFMLRQFELARSVQLRP) threads the bilayer. Residues Q130 and N143 each contribute to the pheophytin a site. Residues 153–166 (VFVSVFLIYPLGQS) traverse the membrane as a helical segment. Residue H198 participates in chlorophyll a binding. A helical membrane pass occupies residues 208–228 (AALLCAIHGATVENTLFEDGD). The a plastoquinone site is built by H215 and F262. A Fe cation-binding site is contributed by H215. H269 contributes to the Fe cation binding site. A helical transmembrane segment spans residues 279–295 (GLWMSALGVVGLALNLR).

The protein belongs to the reaction center PufL/M/PsbA/D family. PSII is composed of 1 copy each of membrane proteins PsbA, PsbB, PsbC, PsbD, PsbE, PsbF, PsbH, PsbI, PsbJ, PsbK, PsbL, PsbM, PsbT, PsbX, PsbY, PsbZ, Psb30/Ycf12, at least 3 peripheral proteins of the oxygen-evolving complex and a large number of cofactors. It forms dimeric complexes. Interacts with PAM68. Requires The D1/D2 heterodimer binds P680, chlorophylls that are the primary electron donor of PSII, and subsequent electron acceptors. It shares a non-heme iron and each subunit binds pheophytin, quinone, additional chlorophylls, carotenoids and lipids. There is also a Cl(-1) ion associated with D1 and D2, which is required for oxygen evolution. The PSII complex binds additional chlorophylls, carotenoids and specific lipids. as cofactor. Post-translationally, phosphorylation occurs in normal plant growth light conditions. Rapid dephosphorylation occurs during heat shock.

The protein resides in the plastid. Its subcellular location is the chloroplast thylakoid membrane. It catalyses the reaction 2 a plastoquinone + 4 hnu + 2 H2O = 2 a plastoquinol + O2. Functionally, photosystem II (PSII) is a light-driven water:plastoquinone oxidoreductase that uses light energy to abstract electrons from H(2)O, generating O(2) and a proton gradient subsequently used for ATP formation. It consists of a core antenna complex that captures photons, and an electron transfer chain that converts photonic excitation into a charge separation. The D1/D2 (PsbA/PsbD) reaction center heterodimer binds P680, the primary electron donor of PSII as well as several subsequent electron acceptors. D2 is needed for assembly of a stable PSII complex. The sequence is that of Photosystem II D2 protein from Arabidopsis thaliana (Mouse-ear cress).